The sequence spans 170 residues: Large ribosomal subunit protein uL11 (170 aa).

Belongs to the universal ribosomal protein uL11 family. As to quaternary structure, part of the ribosomal stalk of the 50S ribosomal subunit. Interacts with L10 and the large rRNA to form the base of the stalk. L10 forms an elongated spine to which L12 dimers bind in a sequential fashion forming a multimeric L10(L12)X complex.

Its function is as follows. Forms part of the ribosomal stalk which helps the ribosome interact with GTP-bound translation factors. This Saccharolobus islandicus (strain M.14.25 / Kamchatka #1) (Sulfolobus islandicus) protein is Large ribosomal subunit protein uL11.